The following is a 170-amino-acid chain: Peptide deformylase (170 aa).

Fe cation is bound by residues C91 and H133. Residue E134 is part of the active site. H137 is a binding site for Fe cation.

The protein belongs to the polypeptide deformylase family. Fe(2+) is required as a cofactor.

The enzyme catalyses N-terminal N-formyl-L-methionyl-[peptide] + H2O = N-terminal L-methionyl-[peptide] + formate. In terms of biological role, removes the formyl group from the N-terminal Met of newly synthesized proteins. Requires at least a dipeptide for an efficient rate of reaction. N-terminal L-methionine is a prerequisite for activity but the enzyme has broad specificity at other positions. The polypeptide is Peptide deformylase (Pectobacterium carotovorum subsp. carotovorum (strain PC1)).